Reading from the N-terminus, the 226-residue chain is ATP synthase F(0) complex subunit a (226 aa).

The next 6 membrane-spanning stretches (helical) occupy residues 12-32 (PTMM…ILFP), 68-88 (WTLM…LGLL), 97-117 (QLSM…VTGF), 138-158 (IPML…ALAV), 164-184 (ITAG…LMSI), and 189-209 (ASIT…VALI).

Belongs to the ATPase A chain family. Component of the ATP synthase complex composed at least of ATP5F1A/subunit alpha, ATP5F1B/subunit beta, ATP5MC1/subunit c (homooctomer), MT-ATP6/subunit a, MT-ATP8/subunit 8, ATP5ME/subunit e, ATP5MF/subunit f, ATP5MG/subunit g, ATP5MK/subunit k, ATP5MJ/subunit j, ATP5F1C/subunit gamma, ATP5F1D/subunit delta, ATP5F1E/subunit epsilon, ATP5PF/subunit F6, ATP5PB/subunit b, ATP5PD/subunit d, ATP5PO/subunit OSCP. ATP synthase complex consists of a soluble F(1) head domain (subunits alpha(3) and beta(3)) - the catalytic core - and a membrane F(0) domain - the membrane proton channel (subunits c, a, 8, e, f, g, k and j). These two domains are linked by a central stalk (subunits gamma, delta, and epsilon) rotating inside the F1 region and a stationary peripheral stalk (subunits F6, b, d, and OSCP). Interacts with DNAJC30; interaction is direct.

The protein resides in the mitochondrion inner membrane. The enzyme catalyses H(+)(in) = H(+)(out). Its function is as follows. Subunit a, of the mitochondrial membrane ATP synthase complex (F(1)F(0) ATP synthase or Complex V) that produces ATP from ADP in the presence of a proton gradient across the membrane which is generated by electron transport complexes of the respiratory chain. ATP synthase complex consist of a soluble F(1) head domain - the catalytic core - and a membrane F(1) domain - the membrane proton channel. These two domains are linked by a central stalk rotating inside the F(1) region and a stationary peripheral stalk. During catalysis, ATP synthesis in the catalytic domain of F(1) is coupled via a rotary mechanism of the central stalk subunits to proton translocation. With the subunit c (ATP5MC1), forms the proton-conducting channel in the F(0) domain, that contains two crucial half-channels (inlet and outlet) that facilitate proton movement from the mitochondrial intermembrane space (IMS) into the matrix. Protons are taken up via the inlet half-channel and released through the outlet half-channel, following a Grotthuss mechanism. This Dasypus novemcinctus (Nine-banded armadillo) protein is ATP synthase F(0) complex subunit a.